Consider the following 595-residue polypeptide: MSEAEASSGMAHNAGPDEKTLQVLRDMANRLRIRSIKATNSSTTSYLIPCSNAEIMSVLFFYTMRYKQEDPENPDNDRCILSKGLPFVNVATGWPGQGLGAACGMAYTGKYFDQASYRVFCLLGDEESTEGSVWEAFAFASYYNLDNLMAIFDVNRIGHSSSMSVEHCIAIYQKRCEAFGWNTYVVDGRDVKTLCHVFSQAAQVRGKPTAVVAKTFKARGMPNVEDAESWYGRPMPKERADAIVKLIESQIQTNKILVPSPPIEDSPQINIMNICMTSPPVYVADDKVSTQRACGLALAKLGHENDRVIVLGSDTKNCNFSDIFKKEHPERFIQCCIAEQNMVNVALGCSTRDRTIVFAYSFAAFFTRAFDQIRLGAISQININLIGCHCGVSTGDDNPYHMALEDLAMFRAIPNCVVFYPSDAVSTEHAVYLAANTKEMCFIRTSQAETAIIYTTQETFQIGQAKVVRHSDNDKVIVIGAGVTLHEALVAAAELSKEDISIRVIDLFTIKPLDIATIISNAKATGGRIITVEDHYPEGGIGGAVCAAVSMEPNIVVHNLAVMDVPRSGRCNEALDFSGISSRHIIVAVKCILMT.

93–95 (GWP) is a thiamine diphosphate binding site. Mg(2+)-binding residues include Asp-125, Asn-155, and Ile-157. Asn-155 contacts thiamine diphosphate. Thiamine diphosphate is bound by residues Lys-217, Glu-339, and Phe-365. The Proton donor role is filled by Glu-339. Residues His-389 and Asp-397 each coordinate substrate. Residue His-401 participates in thiamine diphosphate binding.

Belongs to the transketolase family. As to quaternary structure, homodimer. Requires Mg(2+) as cofactor. It depends on Ca(2+) as a cofactor. Mn(2+) is required as a cofactor. Co(2+) serves as cofactor. The cofactor is thiamine diphosphate. As to expression, not expressed in the embryonic neocortex.

It is found in the cytoplasm. It catalyses the reaction D-sedoheptulose 7-phosphate + D-glyceraldehyde 3-phosphate = aldehydo-D-ribose 5-phosphate + D-xylulose 5-phosphate. Its function is as follows. Catalyzes the transfer of a two-carbon ketol group from a ketose donor to an aldose acceptor, via a covalent intermediate with the cofactor thiamine pyrophosphate. This Mus musculus (Mouse) protein is Transketolase-like protein 1.